A 399-amino-acid polypeptide reads, in one-letter code: Type II secretion system protein L (399 aa).

Topologically, residues Met1–Pro247 are cytoplasmic. A helical membrane pass occupies residues Trp248 to Gly264. Residues Glu265–Pro399 are Periplasmic-facing.

This sequence belongs to the GSP L family. In terms of assembly, type II secretion system is composed of four main components: the outer membrane complex, the inner membrane complex, the cytoplasmic secretion ATPase and the periplasm-spanning pseudopilus. Forms homodimers. Interacts with OutM/GspM. Interacts with OutE/GspE and OutF/GspF.

It localises to the cell inner membrane. Functionally, inner membrane component of the type II secretion system required for the energy-dependent secretion of extracellular factors such as proteases and toxins from the periplasm. Plays a role in the complex assembly and recruits OutM resulting in a stable complex in the inner membrane. Provides thus a link between the energy-providing OutE protein in the cytoplasm and the rest of the T2SS machinery. In Dickeya chrysanthemi (Pectobacterium chrysanthemi), this protein is Type II secretion system protein L (outL).